The primary structure comprises 489 residues: FK506-binding protein 4 (489 aa).

2 disordered regions span residues 40–157 (PDET…GLEL) and 199–378 (GNYV…TTGT). The span at 66–88 (MDIDESDDDYEEDSEEDSDDEEI) shows a compositional bias: acidic residues. Over residues 93-109 (SDKEKARKLKEAAALKE) the composition is skewed to basic and acidic residues. 3 stretches are compositionally biased toward acidic residues: residues 110 to 125 (LEDE…DDEN), 143 to 157 (TDDD…GLEL), and 208 to 250 (GPSE…DELD). Composition is skewed to basic and acidic residues over residues 267–282 (APKL…RTAD), 292–303 (MMAKDGKAKGAD), and 328–353 (EQKK…EAKK). Positions 362 to 378 (QGPTPSGQKPGETTTGT) are enriched in polar residues. Residues 406–489 (VAMRYIGKLE…IFDVKLLEIK (84 aa)) enclose the PPIase FKBP-type domain.

The protein belongs to the FKBP-type PPIase family. FKBP3/4 subfamily. In terms of assembly, binds to histones H3 and H4.

Its subcellular location is the nucleus. It carries out the reaction [protein]-peptidylproline (omega=180) = [protein]-peptidylproline (omega=0). With respect to regulation, inhibited by both FK506 and rapamycin. Functionally, PPIase that acts as a histone chaperone. Histone proline isomerase that increases the rate of cis-trans isomerization at prolines on the histone H3 N-terminal tail. Proline isomerization influences H3 methylation thereby regulating gene expression. The chain is FK506-binding protein 4 (fpr4) from Aspergillus fumigatus (strain ATCC MYA-4609 / CBS 101355 / FGSC A1100 / Af293) (Neosartorya fumigata).